The sequence spans 388 residues: Leucine aminopeptidase 1 (388 aa).

An N-terminal signal peptide occupies residues 1–19; it reads MKSLSLLALAAIAPPAAVA. Positions 20–88 are excised as a propeptide; that stretch reads AVVDHQVPFE…SVKSHERIQV (69 aa). An N-linked (GlcNAc...) asparagine glycan is attached at asparagine 180. Residues histidine 188, aspartate 207, glutamate 246, and aspartate 273 each coordinate Zn(2+). Cysteine 322 and cysteine 326 are joined by a disulfide. Histidine 355 is a Zn(2+) binding site.

It belongs to the peptidase M28 family. M28E subfamily. Monomer. Requires Zn(2+) as cofactor.

The protein resides in the secreted. Functionally, extracellular aminopeptidase that allows assimilation of proteinaceous substrates. This Coccidioides posadasii (strain RMSCC 757 / Silveira) (Valley fever fungus) protein is Leucine aminopeptidase 1 (LAP1).